The sequence spans 643 residues: Pescadillo homolog (643 aa).

Positions 319–412 (KLKTLFKGLK…RLLPTNKYFM (94 aa)) constitute a BRCT domain. Disordered stretches follow at residues 437-475 (AARK…PENE), 492-571 (TDSL…YREN), and 609-643 (DKNA…QILA). Residues 464-475 (SDDEEVQDPENE) are compositionally biased toward acidic residues. The segment covering 492-518 (TDSLNSGKKEGADDATDNGKDAAEKKQ) has biased composition (basic and acidic residues). A compositionally biased stretch (acidic residues) spans 524-544 (GESDDEDEEEEDDDDGEEEED). The stretch at 569–643 (RENEAEKKIV…QKQQRKQILA (75 aa)) forms a coiled coil. The span at 609–635 (DKNARLLANKRERIEKQKRAEQMEKQK) shows a compositional bias: basic and acidic residues.

This sequence belongs to the pescadillo family.

It is found in the nucleus. The protein resides in the nucleolus. Its subcellular location is the nucleoplasm. Its function is as follows. Required for maturation of ribosomal RNAs and formation of the large ribosomal subunit. The protein is Pescadillo homolog of Anopheles gambiae (African malaria mosquito).